The chain runs to 379 residues: Queuine tRNA-ribosyltransferase (379 aa).

Aspartate 94 functions as the Proton acceptor in the catalytic mechanism. Substrate is bound by residues 94-98, aspartate 148, glutamine 191, and glycine 218; that span reads DSGGF. Residues 249-255 form an RNA binding region; sequence GVGSPDS. Aspartate 268 acts as the Nucleophile in catalysis. Residues 273–277 form an RNA binding; important for wobble base 34 recognition region; sequence TRIAR. Residues cysteine 306, cysteine 308, cysteine 311, and histidine 337 each coordinate Zn(2+).

The protein belongs to the queuine tRNA-ribosyltransferase family. Homodimer. Within each dimer, one monomer is responsible for RNA recognition and catalysis, while the other monomer binds to the replacement base PreQ1. Requires Zn(2+) as cofactor.

The enzyme catalyses 7-aminomethyl-7-carbaguanine + guanosine(34) in tRNA = 7-aminomethyl-7-carbaguanosine(34) in tRNA + guanine. It participates in tRNA modification; tRNA-queuosine biosynthesis. Functionally, catalyzes the base-exchange of a guanine (G) residue with the queuine precursor 7-aminomethyl-7-deazaguanine (PreQ1) at position 34 (anticodon wobble position) in tRNAs with GU(N) anticodons (tRNA-Asp, -Asn, -His and -Tyr). Catalysis occurs through a double-displacement mechanism. The nucleophile active site attacks the C1' of nucleotide 34 to detach the guanine base from the RNA, forming a covalent enzyme-RNA intermediate. The proton acceptor active site deprotonates the incoming PreQ1, allowing a nucleophilic attack on the C1' of the ribose to form the product. After dissociation, two additional enzymatic reactions on the tRNA convert PreQ1 to queuine (Q), resulting in the hypermodified nucleoside queuosine (7-(((4,5-cis-dihydroxy-2-cyclopenten-1-yl)amino)methyl)-7-deazaguanosine). The chain is Queuine tRNA-ribosyltransferase from Bacillus cereus (strain G9842).